The following is a 225-amino-acid chain: Rho GDP-dissociation inhibitor 3 (225 aa).

The protein belongs to the Rho GDI family.

Its subcellular location is the cytoplasm. Its function is as follows. Inhibits GDP/GTP exchange reaction of RhoB. Interacts specifically with the GDP- and GTP-bound forms of post-translationally processed Rhob and Rhog proteins, both of which show a growth-regulated expression in mammalian cells. Stimulates the release of the GDP-bound but not the GTP-bound RhoB protein. Also inhibits the GDP/GTP exchange of RhoB but shows less ability to inhibit the dissociation of prebound GTP. The chain is Rho GDP-dissociation inhibitor 3 (ARHGDIG) from Bos taurus (Bovine).